A 203-amino-acid chain; its full sequence is Sporulation delaying protein C (203 aa).

An N-terminal signal peptide occupies residues 1 to 32 (MKSKLLRLLIVSMVTILVFSLVGLSKESSTSA). A propeptide spans 33 to 140 (KENHTFSGED…KYSSNKVTPS (108 aa)) (removed in mature form). Cysteines 141 and 147 form a disulfide. Residues 183 to 203 (SASNNSDLEAAAAKTLKLIHQ) constitute a propeptide, removed in mature form.

In terms of assembly, proprotein probably interacts with chaperone CsaA. Post-translationally, production of active SDP (able to induce SdpI and kill cells) is a multi-step process that requires signal peptide cleavage (probably by SipS or SipT) as well as SdpA and SdpB. The disulfide bond is not required for maximum toxicity.

It is found in the secreted. Its function is as follows. Produces a 42-residue extracellular sporulation delaying protein (SDP) that collapses the proton motive force (probably both the membrane potential and pH gradient) across the cell membrane, which leads to autolysis; may form a proton channel. Induces the lysis of other B.subtilis cells that have not entered the sporulation pathway, inducing cannibalism to provide a source of nutrients to support sporulation, and at the same time delaying commitment to the energetically expensive and irreversible onset of sporulation. Addition of SDP to liquid cultures halts growth, leads to increased cell permeability and eventually cell lysis in a significant subset of the population, although some cells survive and resume growth after a lag period. Effects of SDP are irreversible within 10 minutes. Addition of SDP to solid cultures induces killing, it is much more effective than SKF (AC O31422). Has antibiotic action against Gram-positive Firmicutes (L.acidophilus, M.megaterium, P.polymyxa, S.aureus, S.epidermidis) but not Actinobacteria M.luteus or Gram-negative P.aeruginosa or K.pneumoniae. SDP induces expression of the sdpR-sdpI operon. Its maturation is dependent on SdpA and SdpB. Also functions as a ligand, binds to SdpI triggering a signal transduction cascade that protects the cell against the toxic effects of its own SDP. The chain is Sporulation delaying protein C from Bacillus subtilis (strain 168).